The chain runs to 145 residues: NADH dehydrogenase [ubiquinone] 1 alpha subcomplex subunit 12 (145 aa).

The residue at position 1 (methionine 1) is an N-acetylmethionine.

The protein belongs to the complex I NDUFA12 subunit family. Complex I is composed of 45 different subunits.

The protein resides in the mitochondrion inner membrane. Its function is as follows. Accessory subunit of the mitochondrial membrane respiratory chain NADH dehydrogenase (Complex I), that is believed not to be involved in catalysis. Complex I functions in the transfer of electrons from NADH to the respiratory chain. The immediate electron acceptor for the enzyme is believed to be ubiquinone. In Bos taurus (Bovine), this protein is NADH dehydrogenase [ubiquinone] 1 alpha subcomplex subunit 12 (NDUFA12).